A 373-amino-acid chain; its full sequence is Nodulation protein NolL (373 aa).

9 helical membrane-spanning segments follow: residues 27-47 (DFAK…QYLI), 62-82 (SIYM…SSGA), 98-118 (QLLL…SAVI), 140-160 (WFIW…TFNR), 164-184 (WIIS…SITP), 212-232 (RYKW…FLGW), 253-273 (QVFL…QSMF), 286-306 (RFVA…QGAV), and 324-344 (RITF…AIRS).

Belongs to the acyltransferase 3 family.

The protein resides in the cell membrane. In terms of biological role, thought to be an acetyltransferase that modifies the fucose of the nod factor. The chain is Nodulation protein NolL (nolL) from Mesorhizobium japonicum (strain LMG 29417 / CECT 9101 / MAFF 303099) (Mesorhizobium loti (strain MAFF 303099)).